Here is a 119-residue protein sequence, read N- to C-terminus: Large ribosomal subunit protein bL20 (119 aa).

It belongs to the bacterial ribosomal protein bL20 family.

Its function is as follows. Binds directly to 23S ribosomal RNA and is necessary for the in vitro assembly process of the 50S ribosomal subunit. It is not involved in the protein synthesizing functions of that subunit. The polypeptide is Large ribosomal subunit protein bL20 (Rhodospirillum centenum (strain ATCC 51521 / SW)).